The sequence spans 308 residues: uncharacterized protein (308 aa).

7 consecutive transmembrane segments (helical) span residues 10–30 (IILL…TNLI), 91–111 (LPTI…VVIL), 115–135 (LGLI…LIGI), 178–198 (VIPM…LGLM), 219–239 (ITVL…VDIL), 251–271 (LIVL…KHSI), and 288–308 (INYT…IAFF).

It to M.jannaschii MJ0871, MJ1556 and MJ1589.

The protein resides in the cell membrane. This is an uncharacterized protein from Methanocaldococcus jannaschii (strain ATCC 43067 / DSM 2661 / JAL-1 / JCM 10045 / NBRC 100440) (Methanococcus jannaschii).